A 115-amino-acid chain; its full sequence is Large ribosomal subunit protein bL20 (115 aa).

The protein belongs to the bacterial ribosomal protein bL20 family.

Its function is as follows. Binds directly to 23S ribosomal RNA and is necessary for the in vitro assembly process of the 50S ribosomal subunit. It is not involved in the protein synthesizing functions of that subunit. The chain is Large ribosomal subunit protein bL20 from Chlorobium luteolum (strain DSM 273 / BCRC 81028 / 2530) (Pelodictyon luteolum).